The chain runs to 151 residues: UPF0208 membrane protein plu3094 (151 aa).

A run of 2 helical transmembrane segments spans residues 46–65 (FGIR…QIAL) and 69–91 (LGPA…WWLG).

This sequence belongs to the UPF0208 family.

The protein localises to the cell inner membrane. The protein is UPF0208 membrane protein plu3094 of Photorhabdus laumondii subsp. laumondii (strain DSM 15139 / CIP 105565 / TT01) (Photorhabdus luminescens subsp. laumondii).